The primary structure comprises 708 residues: Elongation factor G (708 aa).

A tr-type G domain is found at 8–290 (KRYRNIGISA…AVIQYLPAPM (283 aa)). GTP is bound by residues 17–24 (AHIDAGKT), 88–92 (DTPGH), and 142–145 (NKMD).

Belongs to the TRAFAC class translation factor GTPase superfamily. Classic translation factor GTPase family. EF-G/EF-2 subfamily.

It localises to the cytoplasm. Functionally, catalyzes the GTP-dependent ribosomal translocation step during translation elongation. During this step, the ribosome changes from the pre-translocational (PRE) to the post-translocational (POST) state as the newly formed A-site-bound peptidyl-tRNA and P-site-bound deacylated tRNA move to the P and E sites, respectively. Catalyzes the coordinated movement of the two tRNA molecules, the mRNA and conformational changes in the ribosome. The polypeptide is Elongation factor G (Psychrobacter arcticus (strain DSM 17307 / VKM B-2377 / 273-4)).